A 205-amino-acid chain; its full sequence is NADH-quinone oxidoreductase subunit I (205 aa).

2 consecutive 4Fe-4S ferredoxin-type domains span residues 75–104 (RLLE…METS) and 114–143 (HEYT…HGGR). Residues C84, C87, C90, C94, C123, C126, C129, and C133 each contribute to the [4Fe-4S] cluster site.

Belongs to the complex I 23 kDa subunit family. In terms of assembly, NDH-1 is composed of 14 different subunits. Subunits NuoA, H, J, K, L, M, N constitute the membrane sector of the complex. [4Fe-4S] cluster serves as cofactor.

The protein resides in the cell inner membrane. It catalyses the reaction a quinone + NADH + 5 H(+)(in) = a quinol + NAD(+) + 4 H(+)(out). In terms of biological role, NDH-1 shuttles electrons from NADH, via FMN and iron-sulfur (Fe-S) centers, to quinones in the respiratory chain. The immediate electron acceptor for the enzyme in this species is believed to be ubiquinone. Couples the redox reaction to proton translocation (for every two electrons transferred, four hydrogen ions are translocated across the cytoplasmic membrane), and thus conserves the redox energy in a proton gradient. The sequence is that of NADH-quinone oxidoreductase subunit I from Wolinella succinogenes (strain ATCC 29543 / DSM 1740 / CCUG 13145 / JCM 31913 / LMG 7466 / NCTC 11488 / FDC 602W) (Vibrio succinogenes).